The sequence spans 80 residues: Defensin-like protein 51 (80 aa).

The first 27 residues, 1–27 (MGFTKILVTFFLVGLLVISSSPQNAIA), serve as a signal peptide directing secretion. 4 cysteine pairs are disulfide-bonded: Cys39-Cys79, Cys43-Cys66, Cys52-Cys77, and Cys56-Cys78.

The protein belongs to the DEFL family.

Its subcellular location is the secreted. This is Defensin-like protein 51 (LCR48) from Arabidopsis thaliana (Mouse-ear cress).